A 361-amino-acid chain; its full sequence is MAAERGAGQQQSQEMMEVDRRVESEESGDEEGKKHGGGGIVANLSEQSLKDGVDRGAEDPEEEHELAVDMETINLDRDAEDVDLTHYRIGKIEGLEVLKKVKSLCLRQNLIKCIENLEELQSLRELDLYDNQIKKIENLEALTELEVLDISFNMLRNIEGIDKLTQLKKLFLVNNKINKIENISNLHQLQMLELGSNRIRAIENIDTLTNLESLFLGKNKITKLQNLDALTNLTVLSVQSNRLAKIEGLQSLVNLRELYLSNNGIEVIEGLENNNKLTMLDIASNRIKKIENISHLTELQEFWMNDNLLESWSDLDELKGARSLETVYLERNPLQKDPQYRRKVMLALPSVRQIDATYVRF.

The segment at 1 to 64 is disordered; that stretch reads MAAERGAGQQ…RGAEDPEEEH (64 aa). An N-acetylalanine modification is found at Ala-2. Phosphoserine occurs at positions 12, 24, 27, 45, and 48. The span at 17–34 shows a compositional bias: basic and acidic residues; it reads EVDRRVESEESGDEEGKK. Residues 48 to 58 are compositionally biased toward basic and acidic residues; sequence SLKDGVDRGAE. LRR repeat units follow at residues 78–99, 100–121, 122–143, 144–165, 166–187, 188–209, 210–231, 232–253, 254–275, 276–297, and 298–319; these read DAEDVDLTHYRIGKIEGLEVLK, KVKSLCLRQNLIKCIENLEELQ, SLRELDLYDNQIKKIENLEALT, ELEVLDISFNMLRNIEGIDKLT, QLKKLFLVNNKINKIENISNLH, QLQMLELGSNRIRAIENIDTLT, NLESLFLGKNKITKLQNLDALT, NLTVLSVQSNRLAKIEGLQSLV, NLRELYLSNNGIEVIEGLENNN, KLTMLDIASNRIKKIENISHLT, and ELQEFWMNDNLLESWSDLDELK. Ser-323 is modified (phosphoserine). The LRRCT domain occupies 332–361; sequence NPLQKDPQYRRKVMLALPSVRQIDATYVRF.

The protein belongs to the SDS22 family. In terms of assembly, interacts with PPP1CA, PPP1CB and PPP1CC/PPP1G. Widely expressed with high level in testis. Expression increases during puberty. Expressed in spermatids and probably also in spermatozoa.

The protein localises to the nucleus. Regulatory subunit of protein phosphatase 1. This Mus musculus (Mouse) protein is Protein phosphatase 1 regulatory subunit 7 (Ppp1r7).